Consider the following 638-residue polypeptide: Chaperone protein DnaK 2 (638 aa).

Position 199 is a phosphothreonine; by autocatalysis (threonine 199). Residues 604–626 are disordered; sequence AKEQAQSAPEGAQEADAAPADDV. Over residues 613–624 the composition is skewed to low complexity; it reads EGAQEADAAPAD.

This sequence belongs to the heat shock protein 70 family.

Acts as a chaperone. The polypeptide is Chaperone protein DnaK 2 (Colwellia psychrerythraea (strain 34H / ATCC BAA-681) (Vibrio psychroerythus)).